The primary structure comprises 1091 residues: ATP-dependent helicase/deoxyribonuclease subunit B (1091 aa).

It belongs to the helicase family. AddB/RexB type 2 subfamily. As to quaternary structure, heterodimer of AddA and RexB. It depends on Mg(2+) as a cofactor.

Functionally, the heterodimer acts as both an ATP-dependent DNA helicase and an ATP-dependent, dual-direction single-stranded exonuclease. Recognizes the chi site generating a DNA molecule suitable for the initiation of homologous recombination. This subunit has 5' -&gt; 3' nuclease activity but not helicase activity. The polypeptide is ATP-dependent helicase/deoxyribonuclease subunit B (Streptococcus pneumoniae (strain ATCC 700669 / Spain 23F-1)).